Here is a 141-residue protein sequence, read N- to C-terminus: Hemoglobin subunit alpha-A (141 aa).

The Globin domain occupies 1–141 (VLSANDKTNV…VGNVLSAKYR (141 aa)). His58 contributes to the O2 binding site. A heme b-binding site is contributed by His87.

This sequence belongs to the globin family. As to quaternary structure, heterotetramer of two alpha chains and two beta chains. As to expression, red blood cells.

Its function is as follows. Involved in oxygen transport from the lung to the various peripheral tissues. This chain is Hemoglobin subunit alpha-A (HBAA), found in Trigonoceps occipitalis (White-headed vulture).